A 452-amino-acid polypeptide reads, in one-letter code: Tol-Pal system protein TolB (452 aa).

Residues 1–31 (MCGVRRGMGVLLLFCAVALCAMPFVVRSVWG) form the signal peptide.

Belongs to the TolB family. The Tol-Pal system is composed of five core proteins: the inner membrane proteins TolA, TolQ and TolR, the periplasmic protein TolB and the outer membrane protein Pal. They form a network linking the inner and outer membranes and the peptidoglycan layer.

The protein resides in the periplasm. Part of the Tol-Pal system, which plays a role in outer membrane invagination during cell division and is important for maintaining outer membrane integrity. This Syntrophus aciditrophicus (strain SB) protein is Tol-Pal system protein TolB.